A 420-amino-acid polypeptide reads, in one-letter code: Replication factor C large subunit (420 aa).

46-53 (GVQGSGKT) is a binding site for ATP.

This sequence belongs to the activator 1 small subunits family. RfcL subfamily. Heteromultimer composed of small subunits (RfcS) and large subunits (RfcL).

Its function is as follows. Part of the RFC clamp loader complex which loads the PCNA sliding clamp onto DNA. The sequence is that of Replication factor C large subunit from Thermoplasma volcanium (strain ATCC 51530 / DSM 4299 / JCM 9571 / NBRC 15438 / GSS1).